The sequence spans 81 residues: Photosystem I iron-sulfur center (81 aa).

2 4Fe-4S ferredoxin-type domains span residues 2–31 (AHTVKIYDTCIGCTQCVRACPTDVLEMVPW) and 39–68 (IASAPRTEDCVGCKRCESACPTDFLSIRVY). Residues C11, C14, C17, C21, C48, C51, C54, and C58 each coordinate [4Fe-4S] cluster.

As to quaternary structure, the eukaryotic PSI reaction center is composed of at least 11 subunits. Requires [4Fe-4S] cluster as cofactor.

Its subcellular location is the plastid. The protein localises to the cyanelle thylakoid membrane. The enzyme catalyses reduced [plastocyanin] + hnu + oxidized [2Fe-2S]-[ferredoxin] = oxidized [plastocyanin] + reduced [2Fe-2S]-[ferredoxin]. Its function is as follows. Apoprotein for the two 4Fe-4S centers FA and FB of photosystem I (PSI); essential for photochemical activity. FB is the terminal electron acceptor of PSI, donating electrons to ferredoxin. The C-terminus interacts with PsaA/B/D and helps assemble the protein into the PSI complex. Required for binding of PsaD and PsaE to PSI. PSI is a cytochrome c6-ferredoxin oxidoreductase, converting photonic excitation into a charge separation, which transfers an electron from the donor P700 chlorophyll pair to the spectroscopically characterized acceptors A0, A1, FX, FA and FB in turn. The chain is Photosystem I iron-sulfur center from Cyanophora paradoxa.